Consider the following 427-residue polypeptide: Diaminobutyrate--2-oxoglutarate transaminase (427 aa).

N6-(pyridoxal phosphate)lysine is present on K269.

Belongs to the class-III pyridoxal-phosphate-dependent aminotransferase family. It depends on pyridoxal 5'-phosphate as a cofactor.

The enzyme catalyses L-2,4-diaminobutanoate + 2-oxoglutarate = L-aspartate 4-semialdehyde + L-glutamate. Its pathway is amine and polyamine biosynthesis; ectoine biosynthesis; L-ectoine from L-aspartate 4-semialdehyde: step 1/3. In terms of biological role, catalyzes reversively the conversion of L-aspartate beta-semialdehyde (ASA) to L-2,4-diaminobutyrate (DABA) by transamination with L-glutamate. In Marinococcus halophilus, this protein is Diaminobutyrate--2-oxoglutarate transaminase (ectB).